Consider the following 363-residue polypeptide: Transcription factor PIF6 (363 aa).

2 disordered regions span residues 154–204 (SEGS…RNDI) and 340–363 (IPNP…KTNR). Positions 178 to 188 (RTRKALVKRKR) are enriched in basic residues. One can recognise a bHLH domain in the interval 188–237 (RNAEAYNSPERNQRNDINKKMRTLQNLLPNSHKDDNESMLDEAINYMTNL). Residues 340-350 (IPNPNSLSNLD) are compositionally biased toward polar residues. The segment covering 354-363 (LHKKSRKTNR) has biased composition (basic residues).

Homodimer. Interacts with APRR1/TOC1. Binds to RGL2 and RGA. Associates to PTAC12/HMR/PAP5 which acts as a transcriptional coactivator. In terms of tissue distribution, mainly expressed in fruits and flowers and, to a lower extent, in leaves, stems, seedlings and roots.

It is found in the nucleus. Transcription factor. The sequence is that of Transcription factor PIF6 from Arabidopsis thaliana (Mouse-ear cress).